The chain runs to 154 residues: MGKMIIDLQIASADESGLPTAAQIEQWATAAVQPQSGEVEMTVRIVDETESHALNFNYRGKDHPTNVLSFPFECPDEVELPLLGDLVICRQVVEREAQEQEKPLIAHWAHMVVHGSLHLLGYDHIEDDEAEEMESLETQIMMGLGFVDPYLSEK.

Positions 114, 118, and 124 each coordinate Zn(2+).

It belongs to the endoribonuclease YbeY family. Requires Zn(2+) as cofactor.

The protein localises to the cytoplasm. Single strand-specific metallo-endoribonuclease involved in late-stage 70S ribosome quality control and in maturation of the 3' terminus of the 16S rRNA. The protein is Endoribonuclease YbeY of Aggregatibacter actinomycetemcomitans (Actinobacillus actinomycetemcomitans).